Consider the following 1227-residue polypeptide: Splicing factor 3B subunit 3 (1227 aa).

It belongs to the RSE1 family. Identified in the spliceosome A complex; remains associated with the spliceosome throughout the splicing process. Component of the spliceosome B complex. Identified in the spliceosome C complex. Identified in the spliceosome E complex. Component of the U11/U12 snRNPs that are part of the U12-type spliceosome. Component of splicing factor SF3B complex. Identified in the SAGA transcription regulatory histone acetylation (HAT) complex; the interaction is RNA-independent.

It localises to the nucleus. Its function is as follows. Involved in pre-mRNA splicing as a component of the splicing factor SF3B complex, a constituent of the spliceosome. SF3B complex is required for 'A' complex assembly formed by the stable binding of U2 snRNP to the branchpoint sequence (BPS) in pre-mRNA. Sequence independent binding of SF3A/SF3B complex upstream of the branch site is essential, it may anchor U2 snRNP to the pre-mRNA. May also be involved in the assembly of the 'E' complex. Also belongs to the minor U12-dependent spliceosome, which is involved in the splicing of rare class of nuclear pre-mRNA intron. The protein is Splicing factor 3B subunit 3 of Drosophila melanogaster (Fruit fly).